Reading from the N-terminus, the 212-residue chain is Adenylate kinase (212 aa).

10–15 (GAGKGT) provides a ligand contact to ATP. The tract at residues 30–59 (STGDMFRAAMANQTEMGRLAKSYIDKGELV) is NMP. AMP contacts are provided by residues threonine 31, arginine 36, 57-59 (ELV), 86-89 (GYPR), and glutamine 93. Positions 127–159 (GRIINRKTGETFHKVFNPPVDYKEEDYYQREDD) are LID. ATP-binding positions include arginine 128 and 137–138 (TF). Positions 156 and 167 each coordinate AMP. ATP is bound at residue glutamine 195.

It belongs to the adenylate kinase family. Monomer.

The protein localises to the cytoplasm. It carries out the reaction AMP + ATP = 2 ADP. The protein operates within purine metabolism; AMP biosynthesis via salvage pathway; AMP from ADP: step 1/1. Functionally, catalyzes the reversible transfer of the terminal phosphate group between ATP and AMP. Plays an important role in cellular energy homeostasis and in adenine nucleotide metabolism. The protein is Adenylate kinase of Streptococcus pyogenes serotype M1.